A 389-amino-acid chain; its full sequence is Probable peptidoglycan glycosyltransferase FtsW (389 aa).

Residues 1-14 (MPIRDWRQQSQRWP) are Cytoplasmic-facing. Residues 15–35 (IDYWLIGALAILITLGLTMVA) form a helical membrane-spanning segment. Topologically, residues 36–57 (SSSIAISEKRFGDPTHYLLRQM) are periplasmic. A helical transmembrane segment spans residues 58 to 78 (FSMGLGLMAAYIVLKIPLSFW). At 79-84 (RKHRGQ) the chain is on the cytoplasmic side. Residues 85 to 105 (LFIVGLVLLVLVLVFGREING) traverse the membrane as a helical segment. At 106–111 (SKRWLP) the chain is on the periplasmic side. The helical transmembrane segment at 112–132 (LVLMNFQVSEFMKIAVVVFMA) threads the bilayer. The Cytoplasmic segment spans residues 133 to 144 (GYLDRHATAVRE). A helical transmembrane segment spans residues 145–165 (SFEAVIRLALPFGVMAILLLL). Residues 166–168 (EPD) lie on the Periplasmic side of the membrane. Residues 169-189 (FGSTFVIAVIITGMLLIAGAP) form a helical membrane-spanning segment. At 190-191 (WR) the chain is on the cytoplasmic side. Residues 192–212 (FFVMTVLPIATLLVMMVITSP) form a helical membrane-spanning segment. Residues 213-268 (YRMARVTNFLDPWSDPFGNGYQLTQALIASGRGEWFGVGIGESVQKLLYLPDAHTD) are Periplasmic-facing. Residues 269-289 (FLFSIYAEEYGLIGVAFLALL) traverse the membrane as a helical segment. The Cytoplasmic portion of the chain corresponds to 290–310 (YLTLLYRCFRIGRKAFNQTHY). The helical transmembrane segment at 311–331 (FGGLIAYGVGIWIVLQAMINM) threads the bilayer. Over 332-344 (GVNLGLFPTKGLT) the chain is Periplasmic. The helical transmembrane segment at 345 to 365 (LPFMSYGGSSVLMLFIGVAMV) threads the bilayer. The Cytoplasmic portion of the chain corresponds to 366–389 (LRVDLETRQAVLEHSVDESGQGKR).

It belongs to the SEDS family. FtsW subfamily.

It is found in the cell inner membrane. The enzyme catalyses [GlcNAc-(1-&gt;4)-Mur2Ac(oyl-L-Ala-gamma-D-Glu-L-Lys-D-Ala-D-Ala)](n)-di-trans,octa-cis-undecaprenyl diphosphate + beta-D-GlcNAc-(1-&gt;4)-Mur2Ac(oyl-L-Ala-gamma-D-Glu-L-Lys-D-Ala-D-Ala)-di-trans,octa-cis-undecaprenyl diphosphate = [GlcNAc-(1-&gt;4)-Mur2Ac(oyl-L-Ala-gamma-D-Glu-L-Lys-D-Ala-D-Ala)](n+1)-di-trans,octa-cis-undecaprenyl diphosphate + di-trans,octa-cis-undecaprenyl diphosphate + H(+). It functions in the pathway cell wall biogenesis; peptidoglycan biosynthesis. Its function is as follows. Peptidoglycan polymerase that is essential for cell division. The sequence is that of Probable peptidoglycan glycosyltransferase FtsW from Hydrogenovibrio crunogenus (strain DSM 25203 / XCL-2) (Thiomicrospira crunogena).